Reading from the N-terminus, the 302-residue chain is Putative peptide permease protein BMEII0861 (302 aa).

A disordered region spans residues 1–22 (MRSSIHASRLRKMGQSIPASTG). Helical transmembrane passes span 38–58 (IFGLVLLTPLLFAVLTYPLWL), 101–121 (LLVAVSSVVLSTAIGFLIGAI), 147–167 (IFLLVLASIIGSGIWSTVVVI), 230–250 (ILLEAGLSFLGLGVPPPAASW), and 268–288 (WQWLFPGGALVLAVLAINFIG). The ABC transmembrane type-1 domain maps to 97–288 (GRISLLVAVS…LAVLAINFIG (192 aa)).

The protein belongs to the binding-protein-dependent transport system permease family. As to quaternary structure, the complex is composed of two ATP-binding proteins (BMEII0863 and BMEII0864), two transmembrane proteins (BMEII0860 and BMEII0861) and a solute-binding protein (BMEII0859).

The protein resides in the cell inner membrane. Functionally, probably part of an ABC transporter complex that could be involved in peptide import. Probably responsible for the translocation of the substrate across the membrane. The sequence is that of Putative peptide permease protein BMEII0861 from Brucella melitensis biotype 1 (strain ATCC 23456 / CCUG 17765 / NCTC 10094 / 16M).